Reading from the N-terminus, the 271-residue chain is Virulence regulon transcriptional activator VirF (271 aa).

The region spanning 167-265 (ERLQKFMEEN…GCTPSQARLT (99 aa)) is the HTH araC/xylS-type domain. 2 DNA-binding regions (H-T-H motif) span residues 184 to 205 (SKFA…GTVY) and 232 to 255 (IVDI…RRRF).

In terms of biological role, transcriptional activator of the Yersinia virulence regulon. The protein is Virulence regulon transcriptional activator VirF (virF) of Yersinia enterocolitica serotype O:8 / biotype 1B (strain NCTC 13174 / 8081).